Here is a 119-residue protein sequence, read N- to C-terminus: Small ribosomal subunit protein bS16 (119 aa).

The protein belongs to the bacterial ribosomal protein bS16 family.

This is Small ribosomal subunit protein bS16 from Chlamydia felis (strain Fe/C-56) (Chlamydophila felis).